The primary structure comprises 125 residues: Small ribosomal subunit protein uS13 (125 aa).

Positions 93–125 are disordered; sequence RKGLPVRGQRTKTNARTRKGPKRTVAGKKKAGR.

It belongs to the universal ribosomal protein uS13 family. In terms of assembly, part of the 30S ribosomal subunit. Forms a loose heterodimer with protein S19. Forms two bridges to the 50S subunit in the 70S ribosome.

Its function is as follows. Located at the top of the head of the 30S subunit, it contacts several helices of the 16S rRNA. In the 70S ribosome it contacts the 23S rRNA (bridge B1a) and protein L5 of the 50S subunit (bridge B1b), connecting the 2 subunits; these bridges are implicated in subunit movement. Contacts the tRNAs in the A and P-sites. The protein is Small ribosomal subunit protein uS13 of Paenarthrobacter aurescens (strain TC1).